The following is a 463-amino-acid chain: Secretogranin-3 (463 aa).

Positions 1–20 are cleaved as a signal peptide; sequence MGPKYVFITAIIGVFWHVQG. Disordered stretches follow at residues 87–111, 225–267, and 353–398; these read VKRSGSVRSSVGGHRGTLDDADSTK, DDDK…PEED, and EDKN…KGKA. 2 stretches are compositionally biased toward basic and acidic residues: residues 102 to 111 and 229 to 262; these read GTLDDADSTK and QEGKMETRNKNEDRESSETKNEDSFSSKERRNEL.

Interacts with CHGA. Interacts with secretogranin II/SCG2. Interacts (via C-terminus) with CPE.

It localises to the cytoplasmic vesicle. The protein localises to the secretory vesicle. It is found in the secretory vesicle membrane. Its subcellular location is the secreted. Member of the granin protein family that regulates the biogenesis of secretory granules. Acts as a sorting receptor for intragranular proteins including chromogranin A/CHGA. May also play a role in angiogenesis. Promotes endothelial proliferation, migration and tube formation through MEK/ERK signaling pathway. This chain is Secretogranin-3 (scg3), found in Xenopus tropicalis (Western clawed frog).